The following is a 548-amino-acid chain: Rop guanine nucleotide exchange factor 1 (548 aa).

A compositionally biased stretch (acidic residues) spans 1–12 (MGSLSSEEDDEV). The interval 1–38 (MGSLSSEEDDEVSSERCGSYSPSADISESESSSSFSCH) is disordered. The span at 19 to 36 (SYSPSADISESESSSSFS) shows a compositional bias: low complexity. Residues 81 to 462 (DKQPDNDLSE…DAMRRSISVT (382 aa)) enclose the PRONE domain. Residues 458–548 (SISVTESLSL…RVTGVTPERD (91 aa)) are involved in auto-inhibition. Serine 460 and serine 480 each carry phosphoserine.

In terms of assembly, interacts with ARAC10/ROP11 and FER. Forms a complex with ARAC11/ROP1 and PRK2. Interacts in vitro (via PRONE domain) with PRK1, PRK2, PRK3 and PRK4. The C-terminal region is also important for the interaction with PRK2. Post-translationally, phosphorylated at Ser-460 and Ser-480 by PRK2. As to expression, expressed in roots, cotyledons, leaves, stems, sepals, petals, anthers, pollen grains, stigmas and siliques.

The protein localises to the cytoplasm. It is found in the cytosol. Its subcellular location is the cell membrane. Phosphorylation at Ser-460 and Ser-480 by PRK2 releases ROPGEF1 auto-inhibition, thereby activating ROPGEF1, which in turn activates ARAC11/ROP1. Guanine-nucleotide exchange factor (GEF) that acts as an activator of Rop (Rho of plants) GTPases by promoting the exchange of GDP for GTP. Acts downstream of PRK2 in the control of polarized pollen tube growth by activating ARAC11/ROP1. In association with ROPGEF4, acts as a specific regulator of ARAC10/ROP11 function in ABA-mediated stomatal closure. May play a role in the Rac/Rop-signaling pathway that controls ROS-mediated root hair development. The polypeptide is Rop guanine nucleotide exchange factor 1 (ROPGEF1) (Arabidopsis thaliana (Mouse-ear cress)).